A 554-amino-acid chain; its full sequence is CTP synthase (554 aa).

The tract at residues 1-265 is amidoligase domain; that stretch reads MTPLIFVTGG…DELVIDQFKL (265 aa). Position 13 (Ser13) interacts with CTP. Ser13 lines the UTP pocket. ATP contacts are provided by residues 14–19 and Asp71; that span reads SLGKGI. Mg(2+) contacts are provided by Asp71 and Glu139. CTP contacts are provided by residues 146 to 148, 186 to 191, and Lys222; these read DIE and KTKPTQ. UTP contacts are provided by residues 186–191 and Lys222; that span reads KTKPTQ. In terms of domain architecture, Glutamine amidotransferase type-1 spans 292–545; it reads TIAVVGKYVD…VRAAREKKAG (254 aa). Gly353 contacts L-glutamine. Catalysis depends on Cys380, which acts as the Nucleophile; for glutamine hydrolysis. L-glutamine-binding positions include 381-384, Glu404, and Arg471; that span reads YGMQ. Catalysis depends on residues His518 and Glu520.

The protein belongs to the CTP synthase family. Homotetramer.

The catalysed reaction is UTP + L-glutamine + ATP + H2O = CTP + L-glutamate + ADP + phosphate + 2 H(+). It catalyses the reaction L-glutamine + H2O = L-glutamate + NH4(+). The enzyme catalyses UTP + NH4(+) + ATP = CTP + ADP + phosphate + 2 H(+). It participates in pyrimidine metabolism; CTP biosynthesis via de novo pathway; CTP from UDP: step 2/2. Its activity is regulated as follows. Allosterically activated by GTP, when glutamine is the substrate; GTP has no effect on the reaction when ammonia is the substrate. The allosteric effector GTP functions by stabilizing the protein conformation that binds the tetrahedral intermediate(s) formed during glutamine hydrolysis. Inhibited by the product CTP, via allosteric rather than competitive inhibition. Catalyzes the ATP-dependent amination of UTP to CTP with either L-glutamine or ammonia as the source of nitrogen. Regulates intracellular CTP levels through interactions with the four ribonucleotide triphosphates. This chain is CTP synthase, found in Xanthomonas campestris pv. campestris (strain B100).